A 550-amino-acid polypeptide reads, in one-letter code: Chaperonin GroEL (550 aa).

Residues 30–33 (TLGP), K51, 87–91 (DGTTT), G415, and D496 each bind ATP.

It belongs to the chaperonin (HSP60) family. In terms of assembly, forms a cylinder of 14 subunits composed of two heptameric rings stacked back-to-back. Interacts with the co-chaperonin GroES.

Its subcellular location is the cytoplasm. The catalysed reaction is ATP + H2O + a folded polypeptide = ADP + phosphate + an unfolded polypeptide.. Functionally, together with its co-chaperonin GroES, plays an essential role in assisting protein folding. The GroEL-GroES system forms a nano-cage that allows encapsulation of the non-native substrate proteins and provides a physical environment optimized to promote and accelerate protein folding. This chain is Chaperonin GroEL, found in Rickettsia bellii (strain OSU 85-389).